The following is a 209-amino-acid chain: Octanoyltransferase (209 aa).

Positions 30-209 constitute a BPL/LPL catalytic domain; sequence VNEPEIVYLV…IQTEFNKIFT (180 aa). Substrate-binding positions include 69–76, 143–145, and 156–158; these read RGGKFTFH, AIG, and GVA. The active-site Acyl-thioester intermediate is the Cys-174.

It belongs to the LipB family.

The protein resides in the cytoplasm. It carries out the reaction octanoyl-[ACP] + L-lysyl-[protein] = N(6)-octanoyl-L-lysyl-[protein] + holo-[ACP] + H(+). The protein operates within protein modification; protein lipoylation via endogenous pathway; protein N(6)-(lipoyl)lysine from octanoyl-[acyl-carrier-protein]: step 1/2. Functionally, catalyzes the transfer of endogenously produced octanoic acid from octanoyl-acyl-carrier-protein onto the lipoyl domains of lipoate-dependent enzymes. Lipoyl-ACP can also act as a substrate although octanoyl-ACP is likely to be the physiological substrate. The chain is Octanoyltransferase from Rickettsia canadensis (strain McKiel).